A 316-amino-acid polypeptide reads, in one-letter code: HPr kinase/phosphorylase (316 aa).

Active-site residues include histidine 143 and lysine 164. Glycine 158–serine 165 provides a ligand contact to ATP. Serine 165 lines the Mg(2+) pocket. Aspartate 182 functions as the Proton acceptor; for phosphorylation activity. Proton donor; for dephosphorylation activity in the catalytic mechanism. The important for the catalytic mechanism of both phosphorylation and dephosphorylation stretch occupies residues leucine 206 to asparagine 215. A Mg(2+)-binding site is contributed by glutamate 207. Arginine 251 is a catalytic residue. The segment at proline 272–arginine 277 is important for the catalytic mechanism of dephosphorylation.

The protein belongs to the HPrK/P family. In terms of assembly, homohexamer. Mg(2+) is required as a cofactor.

It catalyses the reaction [HPr protein]-L-serine + ATP = [HPr protein]-O-phospho-L-serine + ADP + H(+). It carries out the reaction [HPr protein]-O-phospho-L-serine + phosphate + H(+) = [HPr protein]-L-serine + diphosphate. Functionally, catalyzes the ATP- as well as the pyrophosphate-dependent phosphorylation of a specific serine residue in HPr, a phosphocarrier protein of the phosphoenolpyruvate-dependent sugar phosphotransferase system (PTS). HprK/P also catalyzes the pyrophosphate-producing, inorganic phosphate-dependent dephosphorylation (phosphorolysis) of seryl-phosphorylated HPr (P-Ser-HPr). This is HPr kinase/phosphorylase from Stenotrophomonas maltophilia (strain R551-3).